The following is an 877-amino-acid chain: Leucine--tRNA ligase (877 aa).

Residues 43 to 53 (PYPSGRIHMGH) carry the 'HIGH' region motif. Residues 628–632 (KMSKS) carry the 'KMSKS' region motif. Position 631 (lysine 631) interacts with ATP.

This sequence belongs to the class-I aminoacyl-tRNA synthetase family.

It localises to the cytoplasm. It carries out the reaction tRNA(Leu) + L-leucine + ATP = L-leucyl-tRNA(Leu) + AMP + diphosphate. The protein is Leucine--tRNA ligase of Brucella canis (strain ATCC 23365 / NCTC 10854 / RM-666).